The chain runs to 923 residues: Isoleucine--tRNA ligase (923 aa).

Residues 57–67 (PYANGDIHMGH) carry the 'HIGH' region motif. Glutamate 553 contributes to the L-isoleucyl-5'-AMP binding site. The 'KMSKS' region signature appears at 594 to 598 (KMSKS). Lysine 597 provides a ligand contact to ATP. The Zn(2+) site is built by cysteine 888, cysteine 891, cysteine 908, and cysteine 911.

Belongs to the class-I aminoacyl-tRNA synthetase family. IleS type 1 subfamily. As to quaternary structure, monomer. Zn(2+) serves as cofactor.

It is found in the cytoplasm. It catalyses the reaction tRNA(Ile) + L-isoleucine + ATP = L-isoleucyl-tRNA(Ile) + AMP + diphosphate. In terms of biological role, catalyzes the attachment of isoleucine to tRNA(Ile). As IleRS can inadvertently accommodate and process structurally similar amino acids such as valine, to avoid such errors it has two additional distinct tRNA(Ile)-dependent editing activities. One activity is designated as 'pretransfer' editing and involves the hydrolysis of activated Val-AMP. The other activity is designated 'posttransfer' editing and involves deacylation of mischarged Val-tRNA(Ile). In Shouchella clausii (strain KSM-K16) (Alkalihalobacillus clausii), this protein is Isoleucine--tRNA ligase.